Reading from the N-terminus, the 215-residue chain is Variable small protein 2 (215 aa).

An N-terminal signal peptide occupies residues 1 to 18 (MRKRISAIIMTLFMVFMS). Residue C19 is the site of N-palmitoyl cysteine attachment. C19 carries S-diacylglycerol cysteine lipidation.

The protein belongs to the variable small protein (Vsp) family.

The protein resides in the cell outer membrane. The Vlp and Vsp proteins are antigenically distinct proteins, only one vlp or vsp gene is transcriptionally active at any one time. Switching between these genes is a mechanism of host immune response evasion. The polypeptide is Variable small protein 2 (Borrelia hermsii).